Consider the following 297-residue polypeptide: tRNA pseudouridine synthase B (297 aa).

Residue aspartate 39 is the Nucleophile of the active site.

This sequence belongs to the pseudouridine synthase TruB family. Type 1 subfamily.

The catalysed reaction is uridine(55) in tRNA = pseudouridine(55) in tRNA. Functionally, responsible for synthesis of pseudouridine from uracil-55 in the psi GC loop of transfer RNAs. This chain is tRNA pseudouridine synthase B, found in Lactobacillus acidophilus (strain ATCC 700396 / NCK56 / N2 / NCFM).